The chain runs to 287 residues: Survival motor neuron protein (287 aa).

The disordered stretch occupies residues 1-27; the sequence is MGGGGGLPEPEDSVLFRRGTGQSDDSD. Residues 8-39 form a P1 (binding site for GEMIN2) region; the sequence is PEPEDSVLFRRGTGQSDDSDIWDDTALIKAYD. T20 is subject to Phosphothreonine. Phosphoserine occurs at positions 23 and 26. A Glycyl lysine isopeptide (Lys-Gly) (interchain with G-Cter in SUMO2) cross-link involves residue K46. Positions 52 to 83 are disordered; the sequence is GDISEASDKPKSTPKRKPAKKNKSQKKNATTA. The span at 63-77 shows a compositional bias: basic residues; sequence STPKRKPAKKNKSQK. T64 carries the post-translational modification Phosphothreonine. Residues 86-146 form the Tudor domain; the sequence is QWKVGDKCSA…LSPACEVANN (61 aa). The tract at residues 92-205 is required for interaction with RPP20/POP7; that stretch reads KCSAVWSEDG…MSGSGLGPGK (114 aa). Residues 148–216 form a disordered region; the sequence is EQDTQENENE…GVKFSGPPPP (69 aa). The span at 157 to 180 shows a compositional bias: polar residues; the sequence is ESQISTDESENSSRSPGNKPNNIK. A Glycyl lysine isopeptide (Lys-Gly) (interchain with G-Cter in SUMO2) cross-link involves residue K205. The interval 234–261 is P2 (binding site for SM B); the sequence is PPIIPPPPPICPDSLDDADALGSMLISW. A required for interaction with SYNCRIP region spans residues 273–287; it reads GFKQNQKEGRCSHFN.

Belongs to the SMN family. In terms of assembly, homooligomer; may form higher order homooligomers in the dimer to octamer range. Part of the core SMN complex that contains SMN1, GEMIN2/SIP1, DDX20/GEMIN3, GEMIN4, GEMIN5, GEMIN6, GEMIN7, GEMIN8 and STRAP/UNRIP. Part of the SMN-Sm complex that contains SMN1, GEMIN2/SIP1, DDX20/GEMIN3, GEMIN4, GEMIN5, GEMIN6, GEMIN7, GEMIN8, STRAP/UNRIP and the Sm proteins SNRPB, SNRPD1, SNRPD2, SNRPD3, SNRPE, SNRPF and SNRPG. Component of an import snRNP complex composed of KPNB1, RNUT1, SMN1 and ZNF259. Interacts with DDX20, FBL, NOLA1, RNUT1, SYNCRIP and with several spliceosomal snRNP core Sm proteins, including SNRPB, SNRPD1, SNRPD2, SNRPD3, SNRPE and ILF3. Interacts with GEMIN2; the interaction is direct. Interacts with GEMIN3; the interaction is direct. Interacts with GEMIN8; the interaction is direct. Interacts with SNRPB; the interaction is direct. Interacts (via Tudor domain) with SNRPD1 (via C-terminus); the interaction is direct. Interacts with SNRPD2; the interaction is direct. Interacts (via Tudor domain) with SNRPD3 (via C-terminus); the interaction is direct. Interacts with SNRPE; the interaction is direct. Interacts with OSTF1, LSM10, LSM11 and RPP20/POP7. Interacts (via C-terminal region) with ZPR1 (via C-terminal region). Interacts (via Tudor domain) with COIL. Interacts with SETX; recruits SETX to POLR2A. Interacts with POLR2A (via the C-terminal domain (CTD)). Interacts with PRMT5. Interacts with XRN2. Interacts (via C-terminus) with FMR1 (via C-terminus); the interaction is direct and occurs in a RNA-independent manner. Interacts (via Tudor domain) with SF3B2 ('Arg-508'-methylated form). Interacts with WRAP53/TCAB1. Interacts (via Tudor domain) with ELAVL4 in an RNA-independent manner; the interaction is required for localization of ELAVL4 to RNA granules. Interacts with FRG1.

It localises to the nucleus. Its subcellular location is the gem. The protein resides in the cajal body. It is found in the cytoplasm. The protein localises to the cytoplasmic granule. It localises to the perikaryon. Its subcellular location is the cell projection. The protein resides in the neuron projection. It is found in the axon. The protein localises to the myofibril. It localises to the sarcomere. Its subcellular location is the z line. In terms of biological role, the SMN complex catalyzes the assembly of small nuclear ribonucleoproteins (snRNPs), the building blocks of the spliceosome, and thereby plays an important role in the splicing of cellular pre-mRNAs. Most spliceosomal snRNPs contain a common set of Sm proteins SNRPB, SNRPD1, SNRPD2, SNRPD3, SNRPE, SNRPF and SNRPG that assemble in a heptameric protein ring on the Sm site of the small nuclear RNA to form the core snRNP (Sm core). In the cytosol, the Sm proteins SNRPD1, SNRPD2, SNRPE, SNRPF and SNRPG are trapped in an inactive 6S pICln-Sm complex by the chaperone CLNS1A that controls the assembly of the core snRNP. To assemble core snRNPs, the SMN complex accepts the trapped 5Sm proteins from CLNS1A forming an intermediate. Binding of snRNA inside 5Sm ultimately triggers eviction of the SMN complex, thereby allowing binding of SNRPD3 and SNRPB to complete assembly of the core snRNP. Within the SMN complex, SMN1 acts as a structural backbone and together with GEMIN2 it gathers the Sm complex subunits. Ensures the correct splicing of U12 intron-containing genes that may be important for normal motor and proprioceptive neurons development. Also required for resolving RNA-DNA hybrids created by RNA polymerase II, that form R-loop in transcription terminal regions, an important step in proper transcription termination. May also play a role in the metabolism of small nucleolar ribonucleoprotein (snoRNPs). The sequence is that of Survival motor neuron protein (SMN1) from Canis lupus familiaris (Dog).